The primary structure comprises 257 residues: Protein MoaE (257 aa).

Residue 6–29 (VITGGGTGIGAACARLMHPAGERV) participates in NAD(+) binding. Residues 75-96 (LMSSSAAPAGWATAPPPRPATA) are disordered. Substrate is bound at residue S132. Y145 (proton acceptor) is an active-site residue.

Belongs to the short-chain dehydrogenases/reductases (SDR) family.

Functionally, might catalyze the conversion of monoamine compounds or their metabolites. The protein is Protein MoaE (moaE) of Klebsiella aerogenes (Enterobacter aerogenes).